The primary structure comprises 377 residues: uncharacterized protein (377 aa).

Disordered stretches follow at residues 10 to 79 (YSDG…NVNN), 91 to 141 (KKNN…DKEE), 182 to 257 (EAKK…TTTT), 265 to 284 (ENEN…EPIE), and 289 to 326 (LEFN…KEEP). Composition is skewed to low complexity over residues 14-24 (IPQPTITPPTQ), 46-79 (NKNN…NVNN), and 93-124 (NNNN…FNDN). Composition is skewed to basic and acidic residues over residues 182-196 (EAKK…KRGE) and 209-218 (QTPDKKKKLE). Low complexity predominate over residues 221–257 (TSKNNNKSSTTKTELTNTTTNTSSTTNPTTDTTTTTT). Basic and acidic residues-rich tracts occupy residues 265–274 (ENENQEKENN) and 292–303 (NKFEEKPIKEVK). Positions 311–320 (KRNKKRNNPK) are enriched in basic residues.

This is an uncharacterized protein from Dictyostelium discoideum (Social amoeba).